Here is a 478-residue protein sequence, read N- to C-terminus: Bifunctional protein HldE (478 aa).

The ribokinase stretch occupies residues 1-318 (MKITLPDFTR…ENAIHARPES (318 aa)). Residue 195–198 (NLSE) participates in ATP binding. Aspartate 264 is an active-site residue. Residues 344 to 478 (MTNGVFDILH…KTIISGSGKN (135 aa)) are cytidylyltransferase.

The protein in the N-terminal section; belongs to the carbohydrate kinase PfkB family. In the C-terminal section; belongs to the cytidylyltransferase family. As to quaternary structure, homodimer.

It carries out the reaction D-glycero-beta-D-manno-heptose 7-phosphate + ATP = D-glycero-beta-D-manno-heptose 1,7-bisphosphate + ADP + H(+). It catalyses the reaction D-glycero-beta-D-manno-heptose 1-phosphate + ATP + H(+) = ADP-D-glycero-beta-D-manno-heptose + diphosphate. It participates in nucleotide-sugar biosynthesis; ADP-L-glycero-beta-D-manno-heptose biosynthesis; ADP-L-glycero-beta-D-manno-heptose from D-glycero-beta-D-manno-heptose 7-phosphate: step 1/4. The protein operates within nucleotide-sugar biosynthesis; ADP-L-glycero-beta-D-manno-heptose biosynthesis; ADP-L-glycero-beta-D-manno-heptose from D-glycero-beta-D-manno-heptose 7-phosphate: step 3/4. In terms of biological role, catalyzes the phosphorylation of D-glycero-D-manno-heptose 7-phosphate at the C-1 position to selectively form D-glycero-beta-D-manno-heptose-1,7-bisphosphate. Its function is as follows. Catalyzes the ADP transfer from ATP to D-glycero-beta-D-manno-heptose 1-phosphate, yielding ADP-D-glycero-beta-D-manno-heptose. The sequence is that of Bifunctional protein HldE from Erwinia tasmaniensis (strain DSM 17950 / CFBP 7177 / CIP 109463 / NCPPB 4357 / Et1/99).